The sequence spans 206 residues: MKKAVQAKFIKTAILNKDYPIIRSPSGDILPEVAVVGRSNVGKSSLLNHLFEAKHLVKTSATPGKTQALNFFSLNDQIAFADLPGYGYAKVPPSVRKEWGPMVRSYLESRESLKLILFLLDIRRIPNEEDIQFLEWVLYHEKALILVLTKIDKVNQKELRLNTTKILDTLSLMNLHHLYYSVPKNRGRKELMIMIQDALNDEDKQE.

Residues 29 to 201 form the EngB-type G domain; it reads ILPEVAVVGR…MIMIQDALND (173 aa). GTP is bound by residues 37 to 44, 64 to 68, 82 to 85, 149 to 152, and 180 to 182; these read GRSNVGKS, GKTQA, DLPG, TKID, and YSV. Positions 44 and 66 each coordinate Mg(2+).

The protein belongs to the TRAFAC class TrmE-Era-EngA-EngB-Septin-like GTPase superfamily. EngB GTPase family. Mg(2+) serves as cofactor.

Necessary for normal cell division and for the maintenance of normal septation. This chain is Probable GTP-binding protein EngB, found in Protochlamydia amoebophila (strain UWE25).